A 481-amino-acid polypeptide reads, in one-letter code: Cis-aconitate decarboxylase (481 aa).

Residues 462 to 481 form a disordered region; sequence SPPEVASNSPACNNSITNLS. Over residues 467 to 481 the composition is skewed to polar residues; sequence ASNSPACNNSITNLS.

The protein belongs to the PrpD family. As to quaternary structure, homodimer. As to expression, expressed in LPS-tolerized macrophages (at protein level). Expressed in peripheral blood mononuclear cells (PBMCs), microglia and macrophage cells.

The protein resides in the mitochondrion. The enzyme catalyses cis-aconitate + H(+) = itaconate + CO2. In terms of biological role, cis-aconitate decarboxylase that catalyzes production of itaconate and is involved in the inhibition of the inflammatory response. Acts as a negative regulator of the Toll-like receptors (TLRs)-mediated inflammatory innate response by stimulating the tumor necrosis factor alpha-induced protein TNFAIP3 expression via reactive oxygen species (ROS) in LPS-tolerized macrophages. Involved in antimicrobial response of innate immune cells; ACOD1-mediated itaconic acid production contributes to the antimicrobial activity of macrophages by generating itaconate, leading to alkylation of proteins, such as TFEB. Involved in antiviral response following infection by flavivirus in neurons: ACOD1-mediated itaconate production inhibits the activity of succinate dehydrogenase, generating a metabolic state in neurons that suppresses replication of viral genomes. Plays a role in the embryo implantation. This is Cis-aconitate decarboxylase from Homo sapiens (Human).